A 335-amino-acid polypeptide reads, in one-letter code: Anthranilate phosphoribosyltransferase 2 (335 aa).

5-phospho-alpha-D-ribose 1-diphosphate contacts are provided by residues G70, 73–74 (GD), T78, 80–83 (NIST), 98–106 (KHGNRSASS), and S110. Anthranilate is bound at residue G70. Position 82 (S82) interacts with Mg(2+). An anthranilate-binding site is contributed by N101. R156 is an anthranilate binding site. D215 and E216 together coordinate Mg(2+).

This sequence belongs to the anthranilate phosphoribosyltransferase family. Homodimer. Mg(2+) serves as cofactor.

It carries out the reaction N-(5-phospho-beta-D-ribosyl)anthranilate + diphosphate = 5-phospho-alpha-D-ribose 1-diphosphate + anthranilate. It functions in the pathway amino-acid biosynthesis; L-tryptophan biosynthesis; L-tryptophan from chorismate: step 2/5. Functionally, catalyzes the transfer of the phosphoribosyl group of 5-phosphorylribose-1-pyrophosphate (PRPP) to anthranilate to yield N-(5'-phosphoribosyl)-anthranilate (PRA). The protein is Anthranilate phosphoribosyltransferase 2 of Streptomyces coelicolor (strain ATCC BAA-471 / A3(2) / M145).